Here is a 282-residue protein sequence, read N- to C-terminus: Trihydroxynaphthalene reductase (282 aa).

The NADP(+) site is built by Ile41, Asn114, and Arg147. Active-site proton donor residues include Ser164 and Tyr178. Residues Tyr178, Lys182, Ile211, and Thr213 each contribute to the NADP(+) site. Lys182 functions as the Lowers pKa of active site Tyr in the catalytic mechanism.

This sequence belongs to the short-chain dehydrogenases/reductases (SDR) family. Homotetramer.

It functions in the pathway pigment biosynthesis; melanin biosynthesis. Catalyzes the NADPH-dependent reduction of 1,3,8-trihydroxynaphthalene (T3HN) into (-)-vermelone. Essential for appressorial penetration of colletotrichum lagenarium. The sequence is that of Trihydroxynaphthalene reductase (THR1) from Colletotrichum orbiculare (strain 104-T / ATCC 96160 / CBS 514.97 / LARS 414 / MAFF 240422) (Cucumber anthracnose fungus).